The sequence spans 372 residues: MHNQAPIQRRKSTRIYVGNVPIGDGAPIAVQSMTNTRTTDVEATVNQIKALERVGADIVRVSVPTMDAAEAFKLIKQQVNVPLVADIHFDYRIALKVAEYDVDCLRINPGNIGNEERIRMVVDCARDKNIPIRIGVNAGSLEKDLQEKYGEPTPQALLESAMRHVDHLDRLNFDQFKVSVKASDVFLAVESYRLLAKQIDQPLHLGITEAGGARSGAVKSAIGLGLLLSEGIGDTLRVSLAADPVEEIKVGFDILKSLRIRARGINFIACPTCSRQEFDVIGTVNALEQRLEDIITPMDVSIIGCVVNGPGEALVSTLGVTGGNKKSGLYEDGVRKDRLDNDDMIAQLESRIRAKASQLDEARRIDVLQVEK.

4 residues coordinate [4Fe-4S] cluster: Cys270, Cys273, Cys305, and Glu312.

Belongs to the IspG family. Requires [4Fe-4S] cluster as cofactor.

The enzyme catalyses (2E)-4-hydroxy-3-methylbut-2-enyl diphosphate + oxidized [flavodoxin] + H2O + 2 H(+) = 2-C-methyl-D-erythritol 2,4-cyclic diphosphate + reduced [flavodoxin]. It functions in the pathway isoprenoid biosynthesis; isopentenyl diphosphate biosynthesis via DXP pathway; isopentenyl diphosphate from 1-deoxy-D-xylulose 5-phosphate: step 5/6. Functionally, converts 2C-methyl-D-erythritol 2,4-cyclodiphosphate (ME-2,4cPP) into 1-hydroxy-2-methyl-2-(E)-butenyl 4-diphosphate. This is 4-hydroxy-3-methylbut-2-en-1-yl diphosphate synthase (flavodoxin) from Salmonella paratyphi B (strain ATCC BAA-1250 / SPB7).